We begin with the raw amino-acid sequence, 338 residues long: Ketol-acid reductoisomerase (NADP(+)) (338 aa).

The KARI N-terminal Rossmann domain maps to 1–181 (MKVFYDKDCD…GGGKAGIIET (181 aa)). NADP(+) is bound by residues 24–27 (YGSQ), R47, and S52. H107 is an active-site residue. G133 serves as a coordination point for NADP(+). The KARI C-terminal knotted domain occupies 182–327 (TFREETETDL…EKLRAMMPWI (146 aa)). Residues D190, E194, E226, and E230 each coordinate Mg(2+). S251 provides a ligand contact to substrate.

It belongs to the ketol-acid reductoisomerase family. It depends on Mg(2+) as a cofactor.

It catalyses the reaction (2R)-2,3-dihydroxy-3-methylbutanoate + NADP(+) = (2S)-2-acetolactate + NADPH + H(+). It carries out the reaction (2R,3R)-2,3-dihydroxy-3-methylpentanoate + NADP(+) = (S)-2-ethyl-2-hydroxy-3-oxobutanoate + NADPH + H(+). Its pathway is amino-acid biosynthesis; L-isoleucine biosynthesis; L-isoleucine from 2-oxobutanoate: step 2/4. It functions in the pathway amino-acid biosynthesis; L-valine biosynthesis; L-valine from pyruvate: step 2/4. In terms of biological role, involved in the biosynthesis of branched-chain amino acids (BCAA). Catalyzes an alkyl-migration followed by a ketol-acid reduction of (S)-2-acetolactate (S2AL) to yield (R)-2,3-dihydroxy-isovalerate. In the isomerase reaction, S2AL is rearranged via a Mg-dependent methyl migration to produce 3-hydroxy-3-methyl-2-ketobutyrate (HMKB). In the reductase reaction, this 2-ketoacid undergoes a metal-dependent reduction by NADPH to yield (R)-2,3-dihydroxy-isovalerate. This chain is Ketol-acid reductoisomerase (NADP(+)), found in Albidiferax ferrireducens (strain ATCC BAA-621 / DSM 15236 / T118) (Rhodoferax ferrireducens).